The primary structure comprises 229 residues: MRSSDITFVLLSVVATVRSHATFQELWINSVDQVGSCVRLPPTNSPITDLTSTDLRCNVGGTVGVSGVCSVAAGGNVTVEMHQQPGDRSCANEAIGGAHYGPVILYMSKVSNAATDTGSGSWFKVDQEGYDQTLNANCGKRSFTIPSTLAPGDYLLRAEVIALHVAGSVGGAQLYMSCFQLRVTGSGSKNPTGVLFPGAYSATDPGILINIYQTINNYTIPGPTTVFTG.

The first 19 residues, 1–19 (MRSSDITFVLLSVVATVRS), serve as a signal peptide directing secretion. Histidine 20 is a binding site for Cu(2+). A disulfide bond links cysteine 57 and cysteine 178. An N-linked (GlcNAc...) asparagine glycan is attached at asparagine 76. Residue histidine 99 coordinates Cu(2+). Positions 164 and 173 each coordinate O2. Tyrosine 175 is a binding site for Cu(2+). N-linked (GlcNAc...) asparagine glycosylation occurs at asparagine 217.

The protein belongs to the polysaccharide monooxygenase AA9 family. Cu(2+) is required as a cofactor.

It is found in the secreted. It catalyses the reaction [(1-&gt;4)-beta-D-glucosyl]n+m + reduced acceptor + O2 = 4-dehydro-beta-D-glucosyl-[(1-&gt;4)-beta-D-glucosyl]n-1 + [(1-&gt;4)-beta-D-glucosyl]m + acceptor + H2O.. Lytic polysaccharide monooxygenase (LPMO) that depolymerizes crystalline and amorphous polysaccharides via the oxidation of scissile alpha- or beta-(1-4)-glycosidic bonds, yielding C1 and C4 oxidation products. Catalysis by LPMOs requires the reduction of the active-site copper from Cu(II) to Cu(I) by a reducing agent and H(2)O(2) or O(2) as a cosubstrate. This is AA9 family lytic polysaccharide monooxygenase E from Botryotinia fuckeliana (strain B05.10) (Noble rot fungus).